Here is a 393-residue protein sequence, read N- to C-terminus: Dual specificity mitogen-activated protein kinase kinase 1 (393 aa).

Positions 1–27 (MPKKKPTPIQLNPAPDGSAVNGTSSAE) are disordered. Residues 68-361 (FEKISELGAG…LKQLMVHAFI (294 aa)) enclose the Protein kinase domain. Residues 74–82 (LGAGNGGVV), Lys97, 143–146 (MEHM), and 150–153 (SLDQ) each bind ATP. Lys97 serves as a coordination point for U0126. Residue 144–146 (EHM) participates in K-252a binding. Catalysis depends on Asp190, which acts as the Proton acceptor. ATP contacts are provided by residues 192–195 (KPSN) and Asp208. Ser194 provides a ligand contact to K-252a. Residue 208-211 (DFGV) coordinates U0126. Residues Ser218 and Ser222 each carry the phosphoserine; by BRAF and RAF1 modification. The segment at 270–307 (ELELMFGCQVEGDAAETPPRPRTPGRPLSSYGMDSRPP) is RAF1-binding. Thr286 carries the phosphothreonine modification. Thr292 is modified (phosphothreonine; by MAPK1). Position 298 is a phosphoserine; by PAK (Ser298).

Belongs to the protein kinase superfamily. STE Ser/Thr protein kinase family. MAP kinase kinase subfamily. Found in a complex with at least BRAF, HRAS, MAP2K1, MAPK3/ERK1 and RGS14. Forms a heterodimer with MAP2K2/MEK2. Forms heterodimers with KSR2 which further dimerize to form tetramers. Interacts with KSR1 or KSR2 and BRAF; the interaction with KSR1 or KSR2 mediates KSR1-BRAF or KSR2-BRAF dimerization. Interacts with ARBB2, LAMTOR3 and RAF1. Interacts with MAPK1/ERK2. Interacts with MORG1. Interacts with PPARG. Interacts with isoform 1 of VRK2. Interacts with SGK1. Interacts with BIRC6/bruce. Interacts with KAT7; the interaction promotes KAT7 phosphorylation. Interacts with RAF1 and NEK10; the interaction is required for ERK1/2-signaling pathway activation in response to UV irradiation. Interacts with TRAF3IP3. Interacts with MOS. As to quaternary structure, (Microbial infection) Interacts with Yersinia YopJ. In terms of processing, phosphorylation at Ser-218 and Ser-222 by MAP kinase kinase kinases (BRAF or MEKK1) positively regulates kinase activity. Also phosphorylated at Thr-292 by MAPK1/ERK2 and at Ser-298 by PAK. MAPK1/ERK2 phosphorylation of Thr-292 occurs in response to cellular adhesion and leads to inhibition of Ser-298 phosphorylation by PAK. Autophosphorylated at Ser-218 and Ser-222, autophosphosphorylation is promoted by NEK10 following UV irradiation. (Microbial infection) Acetylation by Yersinia YopJ prevents phosphorylation and activation, thus blocking the MAPK signaling pathway. In terms of tissue distribution, widely expressed, with extremely low levels in brain.

It is found in the cytoplasm. Its subcellular location is the cytoskeleton. The protein resides in the microtubule organizing center. It localises to the centrosome. The protein localises to the spindle pole body. It is found in the nucleus. Its subcellular location is the membrane. It catalyses the reaction L-seryl-[protein] + ATP = O-phospho-L-seryl-[protein] + ADP + H(+). It carries out the reaction L-threonyl-[protein] + ATP = O-phospho-L-threonyl-[protein] + ADP + H(+). The enzyme catalyses L-tyrosyl-[protein] + ATP = O-phospho-L-tyrosyl-[protein] + ADP + H(+). With respect to regulation, ras proteins such as HRAS mediate the activation of RAF proteins such as RAF1 or BRAF which in turn activate extracellular signal-regulated kinases (ERK) through MAPK (mitogen-activated protein kinases) and ERK kinases MAP2K1/MEK1 and MAP2K2/MEK2. Activation occurs through phosphorylation of Ser-218 and Ser-222. MAP2K1/MEK1 binds KSR1 or KSR2 releasing the inhibitory intramolecular interaction between KSR1 or KSR2 protein kinase and N-terminal domains. This allows KSR1 or KSR2 dimerization with BRAF leading to BRAF activation and phosphorylation of MAP2K1. MAP2K1/MEK1 is also the target of negative feed-back regulation by its substrate kinases, such as MAPK1/ERK2. These phosphorylate MAP2K1/MEK1 on Thr-292, thereby facilitating dephosphorylation of the activating residues Ser-218 and Ser-222. Inhibited by serine/threonine phosphatase 2A. Many inhibitors have been identified including pyrrole derivatives, TAK-733 (one of a series of 8-methylpyrido[2,3-d]pyrimidine-4,7(3H,8H)-dione derivatives), CH4987655 and RDEA119/BAY 869766. Functionally, dual specificity protein kinase which acts as an essential component of the MAP kinase signal transduction pathway. Binding of extracellular ligands such as growth factors, cytokines and hormones to their cell-surface receptors activates RAS and this initiates RAF1 activation. RAF1 then further activates the dual-specificity protein kinases MAP2K1/MEK1 and MAP2K2/MEK2. Both MAP2K1/MEK1 and MAP2K2/MEK2 function specifically in the MAPK/ERK cascade, and catalyze the concomitant phosphorylation of a threonine and a tyrosine residue in a Thr-Glu-Tyr sequence located in the extracellular signal-regulated kinases MAPK3/ERK1 and MAPK1/ERK2, leading to their activation and further transduction of the signal within the MAPK/ERK cascade. Activates BRAF in a KSR1 or KSR2-dependent manner; by binding to KSR1 or KSR2 releases the inhibitory intramolecular interaction between KSR1 or KSR2 protein kinase and N-terminal domains which promotes KSR1 or KSR2-BRAF dimerization and BRAF activation. Depending on the cellular context, this pathway mediates diverse biological functions such as cell growth, adhesion, survival and differentiation, predominantly through the regulation of transcription, metabolism and cytoskeletal rearrangements. One target of the MAPK/ERK cascade is peroxisome proliferator-activated receptor gamma (PPARG), a nuclear receptor that promotes differentiation and apoptosis. MAP2K1/MEK1 has been shown to export PPARG from the nucleus. The MAPK/ERK cascade is also involved in the regulation of endosomal dynamics, including lysosome processing and endosome cycling through the perinuclear recycling compartment (PNRC), as well as in the fragmentation of the Golgi apparatus during mitosis. The polypeptide is Dual specificity mitogen-activated protein kinase kinase 1 (Homo sapiens (Human)).